The sequence spans 224 residues: Synaptonemal complex protein 3 (224 aa).

Coiled coils occupy residues 63–97 (RVKC…WEER) and 137–171 (HDSM…QSST).

As to quaternary structure, interacts with gras-1. Interacts with brc-1 and brd-1.

The protein localises to the chromosome. Functionally, plays a role in early meiotic events; during prophase I contributes to synaptonemal complex (SC) assembly, synapsis and chiasmata formation and stabilization of homologous chromosomes pairing. Required for restricting SC assembly to bridge paired chromosome axes. Required for the timely progression of meiotic crossover recombination. Required for the synapsis checkpoint. The polypeptide is Synaptonemal complex protein 3 (Caenorhabditis elegans).